A 501-amino-acid chain; its full sequence is L-ornithine N(5)-monooxygenase (501 aa).

The span at 1-16 (MNGTSTTGNGFTNGTN) shows a compositional bias: low complexity. The disordered stretch occupies residues 1–40 (MNGTSTTGNGFTNGTNYPVPKLELQPETTSTSPTRAQTHP). Residues 26-37 (PETTSTSPTRAQ) are compositionally biased toward polar residues. FAD-binding positions include 92–100 (EKQSNFAWH) and Q111. Position 116 (K116) interacts with substrate. V177 lines the FAD pocket. 263 to 266 (SGQS) contributes to the NADP(+) binding site. Substrate is bound by residues 304-307 (NELF) and N334. NADP(+) is bound at residue 334–336 (NYS). 476–478 (SLL) serves as a coordination point for FAD. S479 is a binding site for substrate.

The protein belongs to the lysine N(6)-hydroxylase/L-ornithine N(5)-oxygenase family. Homotetramer. The cofactor is FAD.

It catalyses the reaction L-ornithine + NADPH + O2 = N(5)-hydroxy-L-ornithine + NADP(+) + H2O. It carries out the reaction L-ornithine + NADH + O2 = N(5)-hydroxy-L-ornithine + NAD(+) + H2O. It functions in the pathway siderophore biosynthesis. L-ornithine N(5)-monooxygenase; part of the siderophore biosynthetic pathway. Arthroderma benhamiae produces 2 types of extracellular siderophores, ferrichrome C and ferricrocin. The biosynthesis of these siderophores depends on the hydroxylation of ornithine to N(5)-hydroxyornithine, catalyzed by the monooxygenase sidA. The structure of ferricrocin differs from ferrichrome C only by a serine for alanine substitution and the assembly of both siderophores is suggested to be performed by the nonribosomal peptide synthase (NRPS) sidC. The polypeptide is L-ornithine N(5)-monooxygenase (Arthroderma benhamiae (strain ATCC MYA-4681 / CBS 112371) (Trichophyton mentagrophytes)).